The chain runs to 124 residues: Aspartate 1-decarboxylase (124 aa).

Ser-25 (schiff-base intermediate with substrate; via pyruvic acid) is an active-site residue. Position 25 is a pyruvic acid (Ser) (Ser-25). Thr-57 is a substrate binding site. Tyr-58 (proton donor) is an active-site residue. 73–75 (GAA) contributes to the substrate binding site.

The protein belongs to the PanD family. In terms of assembly, heterooctamer of four alpha and four beta subunits. It depends on pyruvate as a cofactor. Post-translationally, is synthesized initially as an inactive proenzyme, which is activated by self-cleavage at a specific serine bond to produce a beta-subunit with a hydroxyl group at its C-terminus and an alpha-subunit with a pyruvoyl group at its N-terminus.

The protein localises to the cytoplasm. It carries out the reaction L-aspartate + H(+) = beta-alanine + CO2. Its pathway is cofactor biosynthesis; (R)-pantothenate biosynthesis; beta-alanine from L-aspartate: step 1/1. Its function is as follows. Catalyzes the pyruvoyl-dependent decarboxylation of aspartate to produce beta-alanine. The polypeptide is Aspartate 1-decarboxylase (Clostridium botulinum (strain Alaska E43 / Type E3)).